Reading from the N-terminus, the 887-residue chain is Alanine--tRNA ligase (887 aa).

Zn(2+) is bound by residues H581, H585, C683, and H687.

This sequence belongs to the class-II aminoacyl-tRNA synthetase family. Requires Zn(2+) as cofactor.

The protein resides in the cytoplasm. It catalyses the reaction tRNA(Ala) + L-alanine + ATP = L-alanyl-tRNA(Ala) + AMP + diphosphate. Functionally, catalyzes the attachment of alanine to tRNA(Ala) in a two-step reaction: alanine is first activated by ATP to form Ala-AMP and then transferred to the acceptor end of tRNA(Ala). Also edits incorrectly charged Ser-tRNA(Ala) and Gly-tRNA(Ala) via its editing domain. This is Alanine--tRNA ligase from Ehrlichia chaffeensis (strain ATCC CRL-10679 / Arkansas).